The following is a 268-amino-acid chain: Embryonic abundant protein USP92 (268 aa).

Residues 1-22 form the signal peptide; the sequence is MEFAHLTVLSLFCLAFVGITAT. 5 consecutive repeat copies span residues 50-55, 83-88, 101-106, 166-183, and 202-222. Residues 50-106 form a 3 X 6 AA approximate repeats region; that stretch reads GKTNSLPIKSEELKQYSTLFFEHDLHPRKNFILGNTNSVGSIIRPFTKSRQGVTDSI. A BURP domain is found at 68–259; it reads LFFEHDLHPR…GNKAAAWVPN (192 aa). The segment at 166 to 222 is 2 X approximate repeats; that stretch reads YVVEDVKKVGDNAVMCHRLNFEKVVFNCHQVRETTAYVVSLVASDGTKTKALTVCHH. A glycan (N-linked (GlcNAc...) asparagine) is linked at N259.

In terms of tissue distribution, seed.

The polypeptide is Embryonic abundant protein USP92 (Vicia faba (Broad bean)).